Here is a 960-residue protein sequence, read N- to C-terminus: Endoplasmic reticulum aminopeptidase 2 (960 aa).

At 1–20 (MFHSSAMVNSHRKPMFNIHR) the chain is on the cytoplasmic side. Residues 21-40 (GFYCLTAILPQICICSQFSV) traverse the membrane as a helical; Signal-anchor for type II membrane protein segment. At 41–960 (PSSYHFTEDP…TLRTWLMVNT (920 aa)) the chain is on the lumenal side. Asn-85 and Asn-119 each carry an N-linked (GlcNAc...) asparagine glycan. Glu-200 lines the substrate pocket. An N-linked (GlcNAc...) asparagine glycan is attached at Asn-219. A substrate-binding site is contributed by 334–338 (GAMEN). A Zn(2+)-binding site is contributed by His-370. The Proton acceptor role is filled by Glu-371. Residues His-374 and Glu-393 each contribute to the Zn(2+) site. An N-linked (GlcNAc...) asparagine glycan is attached at Asn-405. Cys-421 and Cys-460 are joined by a disulfide. Residue Asn-650 is glycosylated (N-linked (GlcNAc...) asparagine). Cysteines 759 and 766 form a disulfide.

This sequence belongs to the peptidase M1 family. In terms of assembly, heterodimer with ERAP1. Zn(2+) serves as cofactor. In terms of processing, N-glycosylated. In terms of tissue distribution, ubiquitously expressed. Highly expressed in spleen and leukocytes.

Its subcellular location is the endoplasmic reticulum membrane. Functionally, aminopeptidase that plays a central role in peptide trimming, a step required for the generation of most HLA class I-binding peptides. Peptide trimming is essential to customize longer precursor peptides to fit them to the correct length required for presentation on MHC class I molecules. Preferentially hydrolyzes the basic residues Arg and Lys. The chain is Endoplasmic reticulum aminopeptidase 2 (ERAP2) from Homo sapiens (Human).